Reading from the N-terminus, the 586-residue chain is Arginine--tRNA ligase (586 aa).

Residues 131 to 141 carry the 'HIGH' region motif; that stretch reads ANPTGPMHVGH.

This sequence belongs to the class-I aminoacyl-tRNA synthetase family. Monomer.

Its subcellular location is the cytoplasm. The catalysed reaction is tRNA(Arg) + L-arginine + ATP = L-arginyl-tRNA(Arg) + AMP + diphosphate. The protein is Arginine--tRNA ligase of Xanthobacter autotrophicus (strain ATCC BAA-1158 / Py2).